Here is a 269-residue protein sequence, read N- to C-terminus: uncharacterized protein (269 aa).

103–110 (GIFTMGKS) contributes to the ATP binding site.

This is an uncharacterized protein from Mycoplasma pneumoniae (strain ATCC 29342 / M129 / Subtype 1) (Mycoplasmoides pneumoniae).